A 182-amino-acid polypeptide reads, in one-letter code: ATP-dependent protease subunit HslV (182 aa).

Threonine 12 is a catalytic residue. Na(+)-binding residues include alanine 167, cysteine 170, and threonine 173.

This sequence belongs to the peptidase T1B family. HslV subfamily. In terms of assembly, a double ring-shaped homohexamer of HslV is capped on each side by a ring-shaped HslU homohexamer. The assembly of the HslU/HslV complex is dependent on binding of ATP.

It is found in the cytoplasm. It carries out the reaction ATP-dependent cleavage of peptide bonds with broad specificity.. With respect to regulation, allosterically activated by HslU binding. Protease subunit of a proteasome-like degradation complex believed to be a general protein degrading machinery. In Chlorobium limicola (strain DSM 245 / NBRC 103803 / 6330), this protein is ATP-dependent protease subunit HslV.